The chain runs to 152 residues: D-aminoacyl-tRNA deacylase (152 aa).

The Gly-cisPro motif, important for rejection of L-amino acids motif lies at Gly-137–Pro-138.

This sequence belongs to the DTD family. In terms of assembly, homodimer.

It localises to the cytoplasm. It carries out the reaction glycyl-tRNA(Ala) + H2O = tRNA(Ala) + glycine + H(+). The catalysed reaction is a D-aminoacyl-tRNA + H2O = a tRNA + a D-alpha-amino acid + H(+). In terms of biological role, an aminoacyl-tRNA editing enzyme that deacylates mischarged D-aminoacyl-tRNAs. Also deacylates mischarged glycyl-tRNA(Ala), protecting cells against glycine mischarging by AlaRS. Acts via tRNA-based rather than protein-based catalysis; rejects L-amino acids rather than detecting D-amino acids in the active site. By recycling D-aminoacyl-tRNA to D-amino acids and free tRNA molecules, this enzyme counteracts the toxicity associated with the formation of D-aminoacyl-tRNA entities in vivo and helps enforce protein L-homochirality. The sequence is that of D-aminoacyl-tRNA deacylase from Geobacillus sp. (strain WCH70).